We begin with the raw amino-acid sequence, 290 residues long: uncharacterized protein (290 aa).

Belongs to the glycosyltransferase 2 family.

This is an uncharacterized protein from Methanocaldococcus jannaschii (strain ATCC 43067 / DSM 2661 / JAL-1 / JCM 10045 / NBRC 100440) (Methanococcus jannaschii).